A 163-amino-acid chain; its full sequence is Photosystem II extrinsic protein V (163 aa).

Positions 1–26 (MLRKLILITVATVFFACQLLVNPVSA) are cleaved as a signal peptide. Heme c-binding residues include cysteine 63, cysteine 66, histidine 67, and histidine 118.

The protein belongs to the cytochrome c family. PsbV subfamily. PSII is composed of 1 copy each of membrane proteins PsbA, PsbB, PsbC, PsbD, PsbE, PsbF, PsbH, PsbI, PsbJ, PsbK, PsbL, PsbM, PsbT, PsbX, PsbY, PsbZ, Psb30/Ycf12, peripheral proteins PsbO, CyanoQ (PsbQ), PsbU, PsbV and a large number of cofactors. It forms dimeric complexes. Heme c is required as a cofactor.

Its subcellular location is the cellular thylakoid membrane. Functionally, one of the extrinsic, lumenal subunits of photosystem II (PSII). PSII is a light-driven water plastoquinone oxidoreductase, using light energy to abstract electrons from H(2)O, generating a proton gradient subsequently used for ATP formation. The extrinsic proteins stabilize the structure of photosystem II oxygen-evolving complex (OEC), the ion environment of oxygen evolution and protect the OEC against heat-induced inactivation. Low-potential cytochrome c that plays a role in the OEC of PSII. This Aphanothece halophytica protein is Photosystem II extrinsic protein V.